Consider the following 398-residue polypeptide: 1-deoxy-D-xylulose 5-phosphate reductoisomerase (398 aa).

Positions 10, 11, 12, 13, 36, 37, 38, and 124 each coordinate NADPH. Lys125 is a binding site for 1-deoxy-D-xylulose 5-phosphate. Glu126 contacts NADPH. Asp150 lines the Mn(2+) pocket. Positions 151, 152, 186, and 209 each coordinate 1-deoxy-D-xylulose 5-phosphate. Residue Glu152 participates in Mn(2+) binding. Gly215 provides a ligand contact to NADPH. Positions 222, 227, 228, and 231 each coordinate 1-deoxy-D-xylulose 5-phosphate. Residue Glu231 coordinates Mn(2+).

Belongs to the DXR family. As to quaternary structure, homodimer. The cofactor is Mg(2+). It depends on Mn(2+) as a cofactor.

The enzyme catalyses 2-C-methyl-D-erythritol 4-phosphate + NADP(+) = 1-deoxy-D-xylulose 5-phosphate + NADPH + H(+). The protein operates within isoprenoid biosynthesis; isopentenyl diphosphate biosynthesis via DXP pathway; isopentenyl diphosphate from 1-deoxy-D-xylulose 5-phosphate: step 1/6. Functionally, catalyzes the NADPH-dependent rearrangement and reduction of 1-deoxy-D-xylulose-5-phosphate (DXP) to 2-C-methyl-D-erythritol 4-phosphate (MEP). In Yersinia pseudotuberculosis serotype IB (strain PB1/+), this protein is 1-deoxy-D-xylulose 5-phosphate reductoisomerase.